Reading from the N-terminus, the 228-residue chain is 2-C-methyl-D-erythritol 4-phosphate cytidylyltransferase (228 aa).

Belongs to the IspD/TarI cytidylyltransferase family. IspD subfamily.

It catalyses the reaction 2-C-methyl-D-erythritol 4-phosphate + CTP + H(+) = 4-CDP-2-C-methyl-D-erythritol + diphosphate. It participates in isoprenoid biosynthesis; isopentenyl diphosphate biosynthesis via DXP pathway; isopentenyl diphosphate from 1-deoxy-D-xylulose 5-phosphate: step 2/6. Functionally, catalyzes the formation of 4-diphosphocytidyl-2-C-methyl-D-erythritol from CTP and 2-C-methyl-D-erythritol 4-phosphate (MEP). The protein is 2-C-methyl-D-erythritol 4-phosphate cytidylyltransferase of Actinobacillus pleuropneumoniae serotype 3 (strain JL03).